We begin with the raw amino-acid sequence, 293 residues long: Elongation factor Ts (293 aa).

The involved in Mg(2+) ion dislocation from EF-Tu stretch occupies residues Thr-80 to Val-83.

It belongs to the EF-Ts family.

Its subcellular location is the cytoplasm. Associates with the EF-Tu.GDP complex and induces the exchange of GDP to GTP. It remains bound to the aminoacyl-tRNA.EF-Tu.GTP complex up to the GTP hydrolysis stage on the ribosome. In Burkholderia ambifaria (strain MC40-6), this protein is Elongation factor Ts.